A 308-amino-acid chain; its full sequence is Ribosome maturation factor RimP (308 aa).

Disordered stretches follow at residues 1–31 (MARA…AADA), 94–113 (EDIG…AAGG), and 249–308 (DLDE…EMNR). Residues 17-31 (APSRRTGGARAAADA) show a composition bias toward low complexity. Over residues 99–113 (DGAGGTGGSGGAAGG) the composition is skewed to gly residues. Over residues 249-269 (DLDEGLEDDDGLEDEDDEDEY) the composition is skewed to acidic residues.

It belongs to the RimP family.

The protein resides in the cytoplasm. Functionally, required for maturation of 30S ribosomal subunits. In Parafrankia sp. (strain EAN1pec), this protein is Ribosome maturation factor RimP.